The primary structure comprises 244 residues: Ribosome-inactivating protein cucurmosin (244 aa).

Catalysis depends on residues tyrosine 70, tyrosine 109, glutamate 158, and arginine 161. 2 N-linked (GlcNAc...) asparagine glycosylation sites follow: asparagine 189 and asparagine 225.

It belongs to the ribosome-inactivating protein family. Type 1 RIP subfamily. Post-translationally, the N-linked glycan consists of GlcNAc2Man3Xyl.

It catalyses the reaction Endohydrolysis of the N-glycosidic bond at one specific adenosine on the 28S rRNA.. In terms of biological role, has cytotoxic activity towards cancer cells, but not normal cells. Inhibits the growth of the human leukemia cell line K562, the murine melanoma cell line B16 and the lung adenocarcinoma cell line A549 with IC(50) values of 88.1 nM, 63.4 nM and 359.3 nM respectively. This chain is Ribosome-inactivating protein cucurmosin, found in Cucurbita moschata (Winter crookneck squash).